Here is a 641-residue protein sequence, read N- to C-terminus: Phosphomethylpyrimidine synthase (641 aa).

The span at 1-12 (MTDTSTQNTATP) shows a compositional bias: polar residues. Residues 1-25 (MTDTSTQNTATPTDEYGAEIHPKHS) form a disordered region. Residues Asn-200, Met-229, Tyr-258, His-294, 314–316 (SRG), 355–358 (DGLR), and Glu-394 contribute to the substrate site. His-398 lines the Zn(2+) pocket. Tyr-421 is a substrate binding site. Residue His-462 coordinates Zn(2+). The [4Fe-4S] cluster site is built by Cys-542, Cys-545, and Cys-550.

It belongs to the ThiC family. [4Fe-4S] cluster is required as a cofactor.

The catalysed reaction is 5-amino-1-(5-phospho-beta-D-ribosyl)imidazole + S-adenosyl-L-methionine = 4-amino-2-methyl-5-(phosphooxymethyl)pyrimidine + CO + 5'-deoxyadenosine + formate + L-methionine + 3 H(+). The protein operates within cofactor biosynthesis; thiamine diphosphate biosynthesis. Functionally, catalyzes the synthesis of the hydroxymethylpyrimidine phosphate (HMP-P) moiety of thiamine from aminoimidazole ribotide (AIR) in a radical S-adenosyl-L-methionine (SAM)-dependent reaction. This chain is Phosphomethylpyrimidine synthase, found in Corynebacterium jeikeium (strain K411).